The primary structure comprises 359 residues: MGFIGKSVLVSLVALWCFTSSVFTEEVNHKTQTPSLAPAPAPYHHGHHHPHPPHHHHPHPHPHPHPPAKSPVKPPVKAPVSPPAKPPVKPPVYPPTKAPVKPPTKPPVKPPVSPPAKPPVKPPVYPPTKAPVKPPTKPPVKPPVYPPTKAPVKPPTKPPVKPPVYPPTKAPVKPPTKPPVKPPVSPPAKPPVKPPVYPPTKAPVKPPVSPPTKPPVTPPVYPPKFNRSLVAVRGTVYCKSCKYAAFNTLLGAKPIEGATVKLVCKSKKNITAETTTDKNGYFLLLAPKTVTNFGFRGCRVYLVKSKDYKCSKVSKLFGGDVGAELKPEKKLGKSTVVVNKLVYGLFNVGPFAFNPSCPK.

An N-terminal signal peptide occupies residues Met-1 to Thr-24. A disordered region spans residues Thr-31–Pro-215. The segment covering His-44–Pro-66 has biased composition (basic residues). Positions Pro-67–Pro-215 are enriched in pro residues. Residues Pro-71, Pro-75, Pro-79, Pro-82, Pro-83, Pro-87, Pro-91, Pro-95, Pro-99, Pro-103, Pro-107, Pro-111, Pro-114, Pro-115, Pro-119, Pro-123, Pro-127, Pro-131, Pro-135, Pro-139, Pro-143, Pro-147, Pro-151, Pro-155, Pro-159, Pro-163, Pro-167, Pro-171, Pro-175, Pro-179, Pro-183, Pro-186, Pro-187, Pro-191, Pro-195, Pro-199, Pro-203, Pro-207, Pro-210, Pro-211, Pro-215, and Pro-219 each carry the 4-hydroxyproline modification. O-linked (Ara...) hydroxyproline glycosylation is found at Pro-71, Pro-75, Pro-79, Pro-82, Pro-83, Pro-87, Pro-91, Pro-95, Pro-99, Pro-103, Pro-107, Pro-111, Pro-114, Pro-115, Pro-119, Pro-123, Pro-127, Pro-131, Pro-135, Pro-139, Pro-143, Pro-147, Pro-151, Pro-155, Pro-159, Pro-163, Pro-167, Pro-171, Pro-175, Pro-179, Pro-183, Pro-186, Pro-187, Pro-191, Pro-195, Pro-199, Pro-203, Pro-207, Pro-210, Pro-211, Pro-215, and Pro-219. Copy 1 of the repeat occupies Pro-90–Lys-109. Tandem repeats lie at residues Pro-122 to Lys-141, Pro-142 to Lys-161, and Pro-162 to Lys-181. N-linked (GlcNAc...) asparagine glycosylation is found at Asn-226 and Asn-269.

Belongs to the non-classical AGP family. Hydroxylated on numerous prolines in the proline-rich region. In terms of processing, O-glycosylated on numerous hydroxyprolines in the proline-rich region; noncontiguous hydroxylproline residues are glycosylated with arabinogalactan. As to expression, expressed in vascular bundles of roots, leaves, sepals and stamen filaments, and pistils but not stigma.

The protein resides in the secreted. The protein localises to the cell wall. Its function is as follows. Proteoglycan that may contribute to the strengthening of cell walls. This is Non-classical arabinogalactan protein 31 from Arabidopsis thaliana (Mouse-ear cress).